The chain runs to 131 residues: Holo-[acyl-carrier-protein] synthase (131 aa).

Residues Asp8 and Glu63 each coordinate Mg(2+).

It belongs to the P-Pant transferase superfamily. AcpS family. The cofactor is Mg(2+).

Its subcellular location is the cytoplasm. It carries out the reaction apo-[ACP] + CoA = holo-[ACP] + adenosine 3',5'-bisphosphate + H(+). Functionally, transfers the 4'-phosphopantetheine moiety from coenzyme A to a Ser of acyl-carrier-protein. The chain is Holo-[acyl-carrier-protein] synthase from Shewanella halifaxensis (strain HAW-EB4).